A 327-amino-acid chain; its full sequence is Annexin A8-like protein 1 (327 aa).

Annexin repeat units lie at residues 21-92 (FNPD…ALMY), 93-164 (PPYR…CLLQ), 177-249 (ALAL…TVVK), and 253-324 (NLHS…SLVG). Ca(2+)-binding residues include methionine 266, glycine 268, glycine 270, and aspartate 310.

Belongs to the annexin family.

In Homo sapiens (Human), this protein is Annexin A8-like protein 1.